The following is a 367-amino-acid chain: UDP-N-acetylglucosamine--N-acetylmuramyl-(pentapeptide) pyrophosphoryl-undecaprenol N-acetylglucosamine transferase (367 aa).

UDP-N-acetyl-alpha-D-glucosamine is bound by residues 15–17 (TGG), Asn-127, Arg-163, Ser-191, Ile-249, and Gln-294.

The protein belongs to the glycosyltransferase 28 family. MurG subfamily.

It localises to the cell inner membrane. The enzyme catalyses di-trans,octa-cis-undecaprenyl diphospho-N-acetyl-alpha-D-muramoyl-L-alanyl-D-glutamyl-meso-2,6-diaminopimeloyl-D-alanyl-D-alanine + UDP-N-acetyl-alpha-D-glucosamine = di-trans,octa-cis-undecaprenyl diphospho-[N-acetyl-alpha-D-glucosaminyl-(1-&gt;4)]-N-acetyl-alpha-D-muramoyl-L-alanyl-D-glutamyl-meso-2,6-diaminopimeloyl-D-alanyl-D-alanine + UDP + H(+). Its pathway is cell wall biogenesis; peptidoglycan biosynthesis. Cell wall formation. Catalyzes the transfer of a GlcNAc subunit on undecaprenyl-pyrophosphoryl-MurNAc-pentapeptide (lipid intermediate I) to form undecaprenyl-pyrophosphoryl-MurNAc-(pentapeptide)GlcNAc (lipid intermediate II). The chain is UDP-N-acetylglucosamine--N-acetylmuramyl-(pentapeptide) pyrophosphoryl-undecaprenol N-acetylglucosamine transferase from Burkholderia pseudomallei (strain 1106a).